The sequence spans 236 residues: Small ribosomal subunit protein uS2c (236 aa).

Belongs to the universal ribosomal protein uS2 family.

Its subcellular location is the plastid. It is found in the chloroplast. This is Small ribosomal subunit protein uS2c (rps2) from Physcomitrium patens (Spreading-leaved earth moss).